An 86-amino-acid chain; its full sequence is Small ribosomal subunit protein uS17 (86 aa).

Belongs to the universal ribosomal protein uS17 family. Part of the 30S ribosomal subunit.

In terms of biological role, one of the primary rRNA binding proteins, it binds specifically to the 5'-end of 16S ribosomal RNA. The protein is Small ribosomal subunit protein uS17 of Lactococcus lactis subsp. cremoris (strain MG1363).